Consider the following 278-residue polypeptide: MALKTFNPTTPSQRQLVIVDRSSLYKGKPVKALTEGLTKSGGRNNLGRITARFIGGGHKRSYRLVDFKRRKFDVEGTVERIEYDPNRTAFIALVSYADGEQAYIIAPQRLAAGDKVIASEKAVDVKPGNTMPLQYIPVGSIIHNVEMKPGKGGQIARSAGSYAQLVGRDQGMAILRLNSGEQRLVSGICLASIGAVSNPDHANINDGKAGRTVWRGKRPHNRGVVMNPVDHPHGGGEGRTSGGRHPVTPWGKPTKGKRTRSNKSTDKMIMRSRHQRKK.

Residues 218–278 (RPHNRGVVMN…IMRSRHQRKK (61 aa)) form a disordered region.

The protein belongs to the universal ribosomal protein uL2 family. As to quaternary structure, part of the 50S ribosomal subunit. Forms a bridge to the 30S subunit in the 70S ribosome.

In terms of biological role, one of the primary rRNA binding proteins. Required for association of the 30S and 50S subunits to form the 70S ribosome, for tRNA binding and peptide bond formation. It has been suggested to have peptidyltransferase activity; this is somewhat controversial. Makes several contacts with the 16S rRNA in the 70S ribosome. This chain is Large ribosomal subunit protein uL2, found in Rhizobium etli (strain CIAT 652).